The sequence spans 841 residues: Chitin synthase 1 (841 aa).

Positions 1–13 (MNPGQKQEHDQYP) are enriched in basic and acidic residues. The segment at 1-98 (MNPGQKQEHD…YGEAPRRQPR (98 aa)) is disordered. A compositionally biased stretch (pro residues) spans 76–85 (PPQPMGPPSP). The next 9 helical transmembrane spans lie at 302-322 (WFFQ…IDVG), 385-405 (SVFG…FTAL), 526-546 (LIFS…LTSA), 564-584 (ILHT…FILA), 602-622 (FFAI…VVGV), 644-664 (NIII…FLFF), 673-693 (FIQY…YAFC), 778-798 (VISW…ENIL), and 816-836 (LWSV…YLIF).

This sequence belongs to the chitin synthase family.

It localises to the cell membrane. It carries out the reaction [(1-&gt;4)-N-acetyl-beta-D-glucosaminyl](n) + UDP-N-acetyl-alpha-D-glucosamine = [(1-&gt;4)-N-acetyl-beta-D-glucosaminyl](n+1) + UDP + H(+). Functionally, polymerizes chitin, a structural polymer of the cell wall and septum, by transferring the sugar moiety of UDP-GlcNAc to the non-reducing end of the growing chitin polymer. The sequence is that of Chitin synthase 1 (chs1) from Phycomyces blakesleeanus (strain ATCC 8743b / DSM 1359 / FGSC 10004 / NBRC 33097 / NRRL 1555).